Reading from the N-terminus, the 297-residue chain is Tyrosine recombinase XerD (297 aa).

Residues 1–86 (MNDLIDDFLH…SLRSFFHYLM (86 aa)) enclose the Core-binding (CB) domain. The region spanning 107 to 291 (SLPKVLNLDD…TKLRLKDVYK (185 aa)) is the Tyr recombinase domain. Active-site residues include R147, K171, H243, R246, and H269. The O-(3'-phospho-DNA)-tyrosine intermediate role is filled by Y278.

Belongs to the 'phage' integrase family. XerD subfamily. In terms of assembly, forms a cyclic heterotetrameric complex composed of two molecules of XerC and two molecules of XerD.

It is found in the cytoplasm. Site-specific tyrosine recombinase, which acts by catalyzing the cutting and rejoining of the recombining DNA molecules. The XerC-XerD complex is essential to convert dimers of the bacterial chromosome into monomers to permit their segregation at cell division. It also contributes to the segregational stability of plasmids. This chain is Tyrosine recombinase XerD, found in Listeria innocua serovar 6a (strain ATCC BAA-680 / CLIP 11262).